Consider the following 209-residue polypeptide: Protein-L-isoaspartate O-methyltransferase (209 aa).

Residue Ser-60 is part of the active site.

Belongs to the methyltransferase superfamily. L-isoaspartyl/D-aspartyl protein methyltransferase family.

The protein resides in the cytoplasm. The catalysed reaction is [protein]-L-isoaspartate + S-adenosyl-L-methionine = [protein]-L-isoaspartate alpha-methyl ester + S-adenosyl-L-homocysteine. Functionally, catalyzes the methyl esterification of L-isoaspartyl residues in peptides and proteins that result from spontaneous decomposition of normal L-aspartyl and L-asparaginyl residues. It plays a role in the repair and/or degradation of damaged proteins. The chain is Protein-L-isoaspartate O-methyltransferase from Methanococcus vannielii (strain ATCC 35089 / DSM 1224 / JCM 13029 / OCM 148 / SB).